Here is a 103-residue protein sequence, read N- to C-terminus: Small ribosomal subunit protein uS10 (103 aa).

Belongs to the universal ribosomal protein uS10 family. In terms of assembly, part of the 30S ribosomal subunit.

Functionally, involved in the binding of tRNA to the ribosomes. This is Small ribosomal subunit protein uS10 from Tolumonas auensis (strain DSM 9187 / NBRC 110442 / TA 4).